Reading from the N-terminus, the 521-residue chain is Cytochrome P450 monooxygenase ABA2 (521 aa).

The helical transmembrane segment at 15–35 threads the bilayer; that stretch reads AGHLGMAVTFTILVAFTIHVL. N-linked (GlcNAc...) asparagine glycosylation occurs at N366. Heme is bound at residue C458.

This sequence belongs to the cytochrome P450 family. It depends on heme as a cofactor.

The protein localises to the membrane. It participates in hormone biosynthesis. In terms of biological role, cytochrome P450 monooxygenase involved in the biosynthesis of abscisic acid (ABA), a phytohormone that acts antagonistically toward salicylic acid (SA), jasmonic acid (JA) and ethylene (ETH) signaling, to impede plant defense responses. During pathogen-host interaction, ABA plays a dual role in disease severity by increasing plant susceptibility and accelerating pathogenesis in the fungus itself. The first step of the pathway catalyzes the reaction from farnesyl diphosphate to alpha-ionylideneethane performed by the alpha-ionylideneethane synthase ABA3 via a three-step reaction mechanism involving 2 neutral intermediates, beta-farnesene and allofarnesene. The cytochrome P450 monooxygenase ABA1 might then be involved in the conversion of alpha-ionylideneethane to alpha-ionylideneacetic acid. Alpha-ionylideneacetic acid is further converted to abscisic acid in 2 steps involving the cytochrome P450 monooxygenase ABA2 and the short-chain dehydrogenase/reductase ABA4, via the intermediates 1'-deoxy-ABA or 1',4'-trans-diol-ABA, depending on the order of action of these 2 enzymes. ABA2 is responsible for the hydroxylation of carbon atom C-1' and ABA4 might be involved in the oxidation of the C-4' carbon atom. This Pyricularia oryzae (strain 70-15 / ATCC MYA-4617 / FGSC 8958) (Rice blast fungus) protein is Cytochrome P450 monooxygenase ABA2.